The primary structure comprises 67 residues: Large ribosomal subunit protein uL29 (67 aa).

It belongs to the universal ribosomal protein uL29 family.

This Exiguobacterium sibiricum (strain DSM 17290 / CCUG 55495 / CIP 109462 / JCM 13490 / 255-15) protein is Large ribosomal subunit protein uL29.